A 394-amino-acid chain; its full sequence is NAD(P)H-quinone oxidoreductase subunit H (394 aa).

Belongs to the complex I 49 kDa subunit family. In terms of assembly, NDH-1 can be composed of about 15 different subunits; different subcomplexes with different compositions have been identified which probably have different functions.

Its subcellular location is the cellular thylakoid membrane. It catalyses the reaction a plastoquinone + NADH + (n+1) H(+)(in) = a plastoquinol + NAD(+) + n H(+)(out). The catalysed reaction is a plastoquinone + NADPH + (n+1) H(+)(in) = a plastoquinol + NADP(+) + n H(+)(out). NDH-1 shuttles electrons from an unknown electron donor, via FMN and iron-sulfur (Fe-S) centers, to quinones in the respiratory and/or the photosynthetic chain. The immediate electron acceptor for the enzyme in this species is believed to be plastoquinone. Couples the redox reaction to proton translocation, and thus conserves the redox energy in a proton gradient. Cyanobacterial NDH-1 also plays a role in inorganic carbon-concentration. This Nostoc sp. (strain PCC 7120 / SAG 25.82 / UTEX 2576) protein is NAD(P)H-quinone oxidoreductase subunit H.